Here is a 133-residue protein sequence, read N- to C-terminus: MASTDTISDMLTRIRNACAVRHSTTQVPTTKMTLSIAKVLKSEGFIEDYSETGEGINKMLVLTLKYKGKTRQPLINTLQRVSKPGLRVYSPSKKIPRVLGGIGIAIVSTSHGIMTDREARRQGIGGEILCYIW.

The protein belongs to the universal ribosomal protein uS8 family. As to quaternary structure, part of the 30S ribosomal subunit. Contacts proteins S5 and S12.

One of the primary rRNA binding proteins, it binds directly to 16S rRNA central domain where it helps coordinate assembly of the platform of the 30S subunit. This chain is Small ribosomal subunit protein uS8, found in Synechocystis sp. (strain ATCC 27184 / PCC 6803 / Kazusa).